Here is a 581-residue protein sequence, read N- to C-terminus: Intermediate filament protein ifa-3 (581 aa).

The disordered stretch occupies residues 1–33; that stretch reads MADPDSYRSSITSRPAFNRTVTSSTQNYGTPAS. Positions 1-74 are head; sequence MADPDSYRSS…RDDREREKKE (74 aa). A compositionally biased stretch (polar residues) spans 7–33; the sequence is YRSSITSRPAFNRTVTSSTQNYGTPAS. Residues 71–424 form the IF rod domain; sequence EKKEITELND…RMLEGNSEEN (354 aa). The tract at residues 75-106 is coil 1A; sequence ITELNDRLASYIGKVRFLAAQNRKLEADLNVL. The segment at 107–120 is linker 1; it reads QSRFGKSTGSVKIM. The coil 1B stretch occupies residues 121–258; sequence YEMEITTATN…RGFETELKDL (138 aa). The interval 259–276 is linker 12; it reads QAQAARDTTSENREYFKN. Positions 277-424 are coil 2; the sequence is ELMNSIRDIR…RMLEGNSEEN (148 aa). A tail region spans residues 425-578; the sequence is GLRQLVEKVV…THMQRQSQQT (154 aa). One can recognise an LTD domain in the interval 457–574; sequence SRTSYQRSAK…EERATHMQRQ (118 aa).

This sequence belongs to the intermediate filament family. In terms of assembly, forms some heteromeric filaments with ifb-1. In terms of tissue distribution, expressed in the embryonic and larval hypodermis. Also expressed in the ventral nerve cord of larvae.

The protein resides in the cytoplasm. Functionally, cytoplasmic intermediate filaments provide mechanical strength to cells. Essential protein, involved in attachment structures in epidermal cells that connect muscles to the external cuticle. Required for epidermal morphogenesis in embryos. Probable component of embryonic epidermal attachment structures. This Caenorhabditis elegans protein is Intermediate filament protein ifa-3 (ifa-3).